A 782-amino-acid chain; its full sequence is Endonuclease MutS2 (782 aa).

336-343 (GPNTGGKT) contributes to the ATP binding site. Positions 707–782 (LDLRGYRYED…GFGVTVATLK (76 aa)) constitute a Smr domain.

The protein belongs to the DNA mismatch repair MutS family. MutS2 subfamily. In terms of assembly, homodimer. Binds to stalled ribosomes, contacting rRNA.

In terms of biological role, endonuclease that is involved in the suppression of homologous recombination and thus may have a key role in the control of bacterial genetic diversity. Functionally, acts as a ribosome collision sensor, splitting the ribosome into its 2 subunits. Detects stalled/collided 70S ribosomes which it binds and splits by an ATP-hydrolysis driven conformational change. Acts upstream of the ribosome quality control system (RQC), a ribosome-associated complex that mediates the extraction of incompletely synthesized nascent chains from stalled ribosomes and their subsequent degradation. Probably generates substrates for RQC. This Staphylococcus aureus (strain Mu50 / ATCC 700699) protein is Endonuclease MutS2.